A 221-amino-acid chain; its full sequence is MYLLFIILMYLLPFSFQTSEPAYDKSVCDSGNKEYMGIEVYVEATLDEPLRQTTCESEIHKYGASVSNGGLNISVDLLNCFLNFHTVGVYTNRDTVYAKFASLDPWTTEPMNSMTHDDLVKLTEECIVDIYLKCEVDKTKDFMKTNDNRLKPRDFKTVPPSNVGSMIELQSDYCVNDVTAYVKIYDECGNIKQHSIPTLRDYFTTKNGQPRKILKKKIDNC.

A signal peptide spans 1–17 (MYLLFIILMYLLPFSFQ). Asparagine 72 carries N-linked (GlcNAc...) asparagine; by host glycosylation.

The protein belongs to the orthopoxvirus OPG170 family.

Its subcellular location is the secreted. Its function is as follows. May interact with several cellular chemokines to interfere with chemokine-glycosaminoglycan (GAG) interactions at the cell surface to alter chemotaxis of nearby responsive cells. The polypeptide is Protein OPG170 (OPG170) (Monkeypox virus).